A 503-amino-acid polypeptide reads, in one-letter code: MEEFQGYLEVDRSQQHDLLYPLLFREYIYALAHDHGLNRSILFENAGYDNKSSSIIVKRLITRMYQQNRLIFSSKDSIQNQFIGHNKNLYSQIISEGFAVIVEIPFSLRLVFSLERKEMAKSHNLRSIHSIFPFLEDKFTHLDYVSDVLIPYYIHLEILVQTLRYWVKDSSSLHLLRFFLHEYCNSLITPKKHITFFSKGNPRLFLFLYNSHICEYEYIFLFLRNQSSHLRSTSSGIFFERIYFYVKIEHFFKVFFDNNFQCTLWFFKDPFMHYVRYQGKFFLASKDTSLRMNKWKYYLVNLWQYHFYAWFKPGRIDINQLFKYSLDFLGYRSNVRLNSSVVRSQMLZNLFLINNAMKKFETIVPIIPLIGSLYKANFCNTFGHPISKPTRTDSSDSDIIDRFLRICRNLSHYHSGSSKKKSLYRVKYILRLSCVXXXXXXXXXTVRTFVKRLGSEFLEEFLTEEEVVLSLIFPRTYSTSRRLYRGHIWYLDITSINDLVNYE.

The protein belongs to the intron maturase 2 family. MatK subfamily.

It localises to the plastid. The protein resides in the chloroplast. Functionally, usually encoded in the trnK tRNA gene intron. Probably assists in splicing its own and other chloroplast group II introns. The sequence is that of Maturase K from Thryptomene saxicola (Rock thryptomene).